A 432-amino-acid polypeptide reads, in one-letter code: Enolase (432 aa).

Q167 is a binding site for (2R)-2-phosphoglycerate. Catalysis depends on E209, which acts as the Proton donor. Mg(2+)-binding residues include D246, E290, and D317. Residues K342, R371, S372, and K393 each contribute to the (2R)-2-phosphoglycerate site. K342 (proton acceptor) is an active-site residue.

This sequence belongs to the enolase family. In terms of assembly, component of the RNA degradosome, a multiprotein complex involved in RNA processing and mRNA degradation. Mg(2+) is required as a cofactor.

The protein localises to the cytoplasm. Its subcellular location is the secreted. It is found in the cell surface. The enzyme catalyses (2R)-2-phosphoglycerate = phosphoenolpyruvate + H2O. Its pathway is carbohydrate degradation; glycolysis; pyruvate from D-glyceraldehyde 3-phosphate: step 4/5. Its function is as follows. Catalyzes the reversible conversion of 2-phosphoglycerate (2-PG) into phosphoenolpyruvate (PEP). It is essential for the degradation of carbohydrates via glycolysis. The protein is Enolase of Cronobacter sakazakii (strain ATCC BAA-894) (Enterobacter sakazakii).